The following is a 188-amino-acid chain: Adenine phosphoribosyltransferase (188 aa).

It belongs to the purine/pyrimidine phosphoribosyltransferase family. As to quaternary structure, homodimer.

It is found in the cytoplasm. The enzyme catalyses AMP + diphosphate = 5-phospho-alpha-D-ribose 1-diphosphate + adenine. It participates in purine metabolism; AMP biosynthesis via salvage pathway; AMP from adenine: step 1/1. Functionally, catalyzes a salvage reaction resulting in the formation of AMP, that is energically less costly than de novo synthesis. This chain is Adenine phosphoribosyltransferase, found in Burkholderia multivorans (strain ATCC 17616 / 249).